Consider the following 98-residue polypeptide: Putative pterin-4-alpha-carbinolamine dehydratase (98 aa).

It belongs to the pterin-4-alpha-carbinolamine dehydratase family.

The catalysed reaction is (4aS,6R)-4a-hydroxy-L-erythro-5,6,7,8-tetrahydrobiopterin = (6R)-L-erythro-6,7-dihydrobiopterin + H2O. This is Putative pterin-4-alpha-carbinolamine dehydratase from Roseobacter denitrificans (strain ATCC 33942 / OCh 114) (Erythrobacter sp. (strain OCh 114)).